A 385-amino-acid chain; its full sequence is MSIIRSERYSAIFLLCSAALAIIFANVLDPDTWHAVHSAVSEYHIFGLITPHDIVADFLLAVFFFAVAIELKHELVKGELSSFSKAIIPGVCAAGGILVPISIYLSVASVLPNGWPVPTATDVAFSLGILAIFGSSLPSKVRIFLLALAVLDDLAGIVIIATAFSVSISYWWIIVACITVGLFGFCSYRLARCKTSKTFLIIPAMLLCALAAWVSVYQSGIHATIAGVMLGIMLNRKQGAAIEHALEPYINGIILPAFAFLAAMVRVPHLPLDEISPALWGILLGLLFGKLLGISVFGIIALKFFRKKSISFFNLLVVSALGGIGFTVSLLMNELAFLGTPVHEQGVIAVLIGSLLSAILAIILMRCYKGRKSKSLPGRKGRVSH.

Helical transmembrane passes span 9 to 29 (YSAIFLLCSAALAIIFANVLD), 45 to 65 (IFGLITPHDIVADFLLAVFFF), 87 to 107 (IIPGVCAAGGILVPISIYLSV), 114 to 134 (GWPVPTATDVAFSLGILAIFG), 155 to 175 (AGIVIIATAFSVSISYWWIIV), 198 to 218 (TFLIIPAMLLCALAAWVSVYQ), 220 to 235 (GIHATIAGVMLGIMLN), 245 to 265 (ALEPYINGIILPAFAFLAAMV), 282 to 302 (ILLGLLFGKLLGISVFGIIAL), 312 to 332 (FFNLLVVSALGGIGFTVSLLM), and 345 to 365 (QGVIAVLIGSLLSAILAIILM).

This sequence belongs to the NhaA Na(+)/H(+) (TC 2.A.33) antiporter family.

The protein resides in the cell membrane. It carries out the reaction Na(+)(in) + 2 H(+)(out) = Na(+)(out) + 2 H(+)(in). In terms of biological role, na(+)/H(+) antiporter that extrudes sodium in exchange for external protons. This chain is Na(+)/H(+) antiporter NhaA, found in Tropheryma whipplei (strain TW08/27) (Whipple's bacillus).